The chain runs to 297 residues: Probable endonuclease 4 (297 aa).

The Zn(2+) site is built by H69, H110, E145, D179, H182, H214, D227, H229, and E259.

This sequence belongs to the AP endonuclease 2 family. Zn(2+) is required as a cofactor.

The enzyme catalyses Endonucleolytic cleavage to 5'-phosphooligonucleotide end-products.. Its function is as follows. Endonuclease IV plays a role in DNA repair. It cleaves phosphodiester bonds at apurinic or apyrimidinic (AP) sites, generating a 3'-hydroxyl group and a 5'-terminal sugar phosphate. The sequence is that of Probable endonuclease 4 from Bacillus velezensis (strain DSM 23117 / BGSC 10A6 / LMG 26770 / FZB42) (Bacillus amyloliquefaciens subsp. plantarum).